The following is a 116-amino-acid chain: Ribosome-binding factor A (116 aa).

It belongs to the RbfA family. In terms of assembly, monomer. Binds 30S ribosomal subunits, but not 50S ribosomal subunits or 70S ribosomes.

The protein resides in the cytoplasm. Its function is as follows. One of several proteins that assist in the late maturation steps of the functional core of the 30S ribosomal subunit. Associates with free 30S ribosomal subunits (but not with 30S subunits that are part of 70S ribosomes or polysomes). Required for efficient processing of 16S rRNA. May interact with the 5'-terminal helix region of 16S rRNA. The chain is Ribosome-binding factor A from Clostridium perfringens (strain 13 / Type A).